A 196-amino-acid chain; its full sequence is Pyridoxal 5'-phosphate synthase subunit PdxT (196 aa).

47-49 provides a ligand contact to L-glutamine; the sequence is GES. C79 acts as the Nucleophile in catalysis. L-glutamine contacts are provided by residues R106 and 134 to 135; that span reads IR. Residues H170 and E172 each act as charge relay system in the active site.

The protein belongs to the glutaminase PdxT/SNO family. As to quaternary structure, in the presence of PdxS, forms a dodecamer of heterodimers. Only shows activity in the heterodimer.

It catalyses the reaction aldehydo-D-ribose 5-phosphate + D-glyceraldehyde 3-phosphate + L-glutamine = pyridoxal 5'-phosphate + L-glutamate + phosphate + 3 H2O + H(+). It carries out the reaction L-glutamine + H2O = L-glutamate + NH4(+). It functions in the pathway cofactor biosynthesis; pyridoxal 5'-phosphate biosynthesis. Functionally, catalyzes the hydrolysis of glutamine to glutamate and ammonia as part of the biosynthesis of pyridoxal 5'-phosphate. The resulting ammonia molecule is channeled to the active site of PdxS. This chain is Pyridoxal 5'-phosphate synthase subunit PdxT, found in Bacillus cytotoxicus (strain DSM 22905 / CIP 110041 / 391-98 / NVH 391-98).